The sequence spans 646 residues: ATP-dependent rRNA helicase SPB4 (646 aa).

Residues 15–43 (WGALTPSLAPWILDYLSSMGFEQPTPVQK) carry the Q motif motif. The Helicase ATP-binding domain maps to 46 to 247 (FDIFRGNKDV…TVGLLYPHKI (202 aa)). 59 to 66 (AVTGSGKT) is an ATP binding site. Positions 195–198 (DEAD) match the DEAD box motif. The region spanning 284-434 (ALCQLLERLE…PLAKPPVSVT (151 aa)) is the Helicase C-terminal domain. 2 stretches are compositionally biased toward basic and acidic residues: residues 539–548 (KKEKAAREAQ) and 566–581 (NEAW…VKAA). The interval 539-646 (KKEKAAREAQ…GGDEFEGFDD (108 aa)) is disordered. Residues 572–623 (KHEHEDVKAARREKKRRKREAQRLGDMTEPEREEQRKLDEMIAEVRRRNAEA) are a coiled coil. Residues 582-591 (RREKKRRKRE) show a composition bias toward basic residues. Residues 600–621 (EPEREEQRKLDEMIAEVRRRNA) show a composition bias toward basic and acidic residues. Low complexity predominate over residues 622-631 (EAPTPAAQAA).

This sequence belongs to the DEAD box helicase family. DDX55/SPB4 subfamily. As to quaternary structure, component of pre-60S ribosomal complexes.

The protein resides in the nucleus. It localises to the nucleolus. It carries out the reaction ATP + H2O = ADP + phosphate + H(+). Its function is as follows. ATP-binding RNA helicase involved in the biogenesis of 60S ribosomal subunits. Binds 90S pre-ribosomal particles and dissociates from pre-60S ribosomal particles after processing of 27SB pre-rRNA. Required for the normal formation of 18S rRNA through the processing of pre-rRNAs at sites A0, A1 and A2, and the normal formation of 25S and 5.8S rRNAs through the processing of pre-rRNAs at sites C1 and C2. The polypeptide is ATP-dependent rRNA helicase SPB4 (Chaetomium globosum (strain ATCC 6205 / CBS 148.51 / DSM 1962 / NBRC 6347 / NRRL 1970) (Soil fungus)).